The sequence spans 228 residues: ATP-dependent dethiobiotin synthetase BioD (228 aa).

Residue 13 to 18 coordinates ATP; sequence DVGKTV. Thr-17 lines the Mg(2+) pocket. The active site involves Lys-38. ATP-binding positions include Asp-55, 116–119, 176–177, and 205–207; these read EGAG, NR, and PYI. Mg(2+)-binding residues include Asp-55 and Glu-116.

It belongs to the dethiobiotin synthetase family. Homodimer. The cofactor is Mg(2+).

Its subcellular location is the cytoplasm. The catalysed reaction is (7R,8S)-7,8-diammoniononanoate + CO2 + ATP = (4R,5S)-dethiobiotin + ADP + phosphate + 3 H(+). Its pathway is cofactor biosynthesis; biotin biosynthesis; biotin from 7,8-diaminononanoate: step 1/2. In terms of biological role, catalyzes a mechanistically unusual reaction, the ATP-dependent insertion of CO2 between the N7 and N8 nitrogen atoms of 7,8-diaminopelargonic acid (DAPA, also called 7,8-diammoniononanoate) to form a ureido ring. The polypeptide is ATP-dependent dethiobiotin synthetase BioD (Vibrio parahaemolyticus serotype O3:K6 (strain RIMD 2210633)).